Consider the following 1137-residue polypeptide: Isoleucine--tRNA ligase (1137 aa).

The short motif at Pro50–His60 is the 'HIGH' region element. The short motif at Lys688 to Arg692 is the 'KMSKS' region element. Lys691 provides a ligand contact to ATP.

It belongs to the class-I aminoacyl-tRNA synthetase family. IleS type 2 subfamily. Monomer. The cofactor is Zn(2+).

The protein resides in the cytoplasm. The enzyme catalyses tRNA(Ile) + L-isoleucine + ATP = L-isoleucyl-tRNA(Ile) + AMP + diphosphate. Catalyzes the attachment of isoleucine to tRNA(Ile). As IleRS can inadvertently accommodate and process structurally similar amino acids such as valine, to avoid such errors it has two additional distinct tRNA(Ile)-dependent editing activities. One activity is designated as 'pretransfer' editing and involves the hydrolysis of activated Val-AMP. The other activity is designated 'posttransfer' editing and involves deacylation of mischarged Val-tRNA(Ile). The protein is Isoleucine--tRNA ligase of Porphyromonas gingivalis (strain ATCC BAA-308 / W83).